The primary structure comprises 243 residues: Geranylgeranylglyceryl phosphate synthase (243 aa).

Residues Asp-22 and Ser-51 each coordinate Mg(2+). Sn-glycerol 1-phosphate-binding positions include 169–175, 200–201, and 222–223; these read YLEAGSG, GG, and GT.

This sequence belongs to the GGGP/HepGP synthase family. Group II subfamily. The cofactor is Mg(2+).

It is found in the cytoplasm. It catalyses the reaction sn-glycerol 1-phosphate + (2E,6E,10E)-geranylgeranyl diphosphate = sn-3-O-(geranylgeranyl)glycerol 1-phosphate + diphosphate. It functions in the pathway membrane lipid metabolism; glycerophospholipid metabolism. Its function is as follows. Prenyltransferase that catalyzes the transfer of the geranylgeranyl moiety of geranylgeranyl diphosphate (GGPP) to the C3 hydroxyl of sn-glycerol-1-phosphate (G1P). This reaction is the first ether-bond-formation step in the biosynthesis of archaeal membrane lipids. This Methanosphaera stadtmanae (strain ATCC 43021 / DSM 3091 / JCM 11832 / MCB-3) protein is Geranylgeranylglyceryl phosphate synthase.